Consider the following 739-residue polypeptide: MASIMEGPLSKWTNVMKGWQYRWFVLDYNAGLLSYYTSKDKMMRGSRRGCVRLRGAVIGIDDEDDSTFTITVDQKTFHFQARDADEREKWIHALEETILRHTLQIQQGLDSGFVPSVQDFDKKLAESDAYLQILIDQIKLFDDKIQSCKDDEQRKKIEDLKDTTCSMVESIKHCIVLLQIAKDQTNEEKHADGFISTINPVDSIYQPSALESVVIPTMPTQASPVPESVQVCKGEPRPSSLAVGPVVSNLGSRQSPTPISTGSGQSAPSSSLTSPSHVNLSPNTVPDFSYSSSEDEFYDADEFYQSSTSPKRCMDSSESATALTHSSTGASLKRPDTTESLNSSMSNGTNEAEQFDTHDDRDDDGEGESVEEHKSVIMHLLSQVRLGMDLTKVVLPTFILERRSLLEMYADFFAHPDLFVSIGEHKDPKDRMAQVVKWYLSAFHAGRKGSVAKKPYNPILGEVFQCHWALPGLENDENPEAVSEGPIPWASKNNVTFVAEQVSHHPPISAFYAECYNKRIQFNAHIWTKSKFLGMSIGVHNIGQGCVSCLDYDEHYILTFPNGYGRSILTVPWVELGGECTINCSKTGYNATITFHTKPFYGGKKHRVTAEIYSPNDKKPFCSIEGEWNGIMYAKNANGENTVFIDTKKMPTVKKKVRKLEDQEEYESRRMWKDVTFNLKIKDIDAATEAKHRLEEKQRAEARERKEKEKQWETRLFHEDGECWVYDEPLLKREPSLRY.

The PH domain occupies 2–99; that stretch reads ASIMEGPLSK…WIHALEETIL (98 aa). Disordered stretches follow at residues 220–292 and 306–371; these read TQAS…SYSS and SSTS…ESVE. Residues 249-259 are compositionally biased toward polar residues; sequence NLGSRQSPTPI. Low complexity predominate over residues 260–276; sequence STGSGQSAPSSSLTSPS. Polar residues-rich tracts occupy residues 277-292, 306-330, and 338-352; these read HVNL…SYSS, SSTS…STGA, and TESL…TNEA.

It belongs to the OSBP family.

It carries out the reaction a 1,2-diacyl-sn-glycero-3-phospho-(1D-myo-inositol 4-phosphate)(out) + a 1,2-diacyl-sn-glycero-3-phospho-L-serine(in) = a 1,2-diacyl-sn-glycero-3-phospho-(1D-myo-inositol 4-phosphate)(in) + a 1,2-diacyl-sn-glycero-3-phospho-L-serine(out). Its function is as follows. Interacts with OSBPL11 to function as lipid transfer proteins. Together they form a heterodimer that localizes at the ER-trans-Golgi membrane contact sites, and exchanges phosphatidylserine (1,2-diacyl-sn-glycero-3-phospho-L-serine, PS) for phosphatidylinositol-4-phosphate (1,2-diacyl-sn-glycero-3-phospho-(1D-myo-inositol 4-phosphate), PI(4)P) between the two organelles, a step that is critical for sphingomyelin synthesis in the Golgi complex. This Xenopus tropicalis (Western clawed frog) protein is Oxysterol-binding protein-related protein 9 (osbpl9).